The following is a 382-amino-acid chain: Glycerate kinase (382 aa).

The protein belongs to the glycerate kinase type-1 family.

It carries out the reaction (R)-glycerate + ATP = (2R)-3-phosphoglycerate + ADP + H(+). This chain is Glycerate kinase (glxK), found in Bacillus subtilis (strain 168).